Reading from the N-terminus, the 327-residue chain is Delta(3,5)-Delta(2,4)-dienoyl-CoA isomerase, mitochondrial (327 aa).

Residues 1 to 33 (MATAMTVSSKLLGLLMQQLRGTRQLYFNVSLRS) constitute a mitochondrion transit peptide. Residues 115–119 (SGIDL) and G173 each bind substrate. Position 230 is an N6-succinyllysine (K230). S267 carries the post-translational modification Phosphoserine. K316 is modified (N6-succinyllysine). Residues 325-327 (SKL) carry the Microbody targeting signal motif. K326 is subject to N6-acetyllysine.

Belongs to the enoyl-CoA hydratase/isomerase family. In terms of assembly, homohexamer. Expressed in heart and liver (at protein level).

The protein localises to the mitochondrion. It localises to the peroxisome. The enzyme catalyses (3E,5Z)-octadienoyl-CoA = (2E,4E)-octadienoyl-CoA. The catalysed reaction is (3E,5Z,8Z,11Z,14Z)-eicosapentaenoyl-CoA = (2E,4E,8Z,11Z,14Z)-eicosapentaenoyl-CoA. The protein operates within lipid metabolism; fatty acid beta-oxidation. Its function is as follows. Isomerization of 3-trans,5-cis-dienoyl-CoA to 2-trans,4-trans-dienoyl-CoA. This chain is Delta(3,5)-Delta(2,4)-dienoyl-CoA isomerase, mitochondrial, found in Rattus norvegicus (Rat).